The chain runs to 270 residues: S-adenosylmethionine decarboxylase proenzyme (270 aa).

The Schiff-base intermediate with substrate; via pyruvic acid role is filled by Ser120. Ser120 carries the post-translational modification Pyruvic acid (Ser); by autocatalysis. The active-site Proton acceptor; for processing activity is the His125. Catalysis depends on Cys148, which acts as the Proton donor; for catalytic activity.

Belongs to the prokaryotic AdoMetDC family. Type 2 subfamily. As to quaternary structure, heterooctamer of four alpha and four beta chains arranged as a tetramer of alpha/beta heterodimers. Requires pyruvate as cofactor. Post-translationally, is synthesized initially as an inactive proenzyme. Formation of the active enzyme involves a self-maturation process in which the active site pyruvoyl group is generated from an internal serine residue via an autocatalytic post-translational modification. Two non-identical subunits are generated from the proenzyme in this reaction, and the pyruvate is formed at the N-terminus of the alpha chain, which is derived from the carboxyl end of the proenzyme. The post-translation cleavage follows an unusual pathway, termed non-hydrolytic serinolysis, in which the side chain hydroxyl group of the serine supplies its oxygen atom to form the C-terminus of the beta chain, while the remainder of the serine residue undergoes an oxidative deamination to produce ammonia and the pyruvoyl group blocking the N-terminus of the alpha chain.

It catalyses the reaction S-adenosyl-L-methionine + H(+) = S-adenosyl 3-(methylsulfanyl)propylamine + CO2. It participates in amine and polyamine biosynthesis; S-adenosylmethioninamine biosynthesis; S-adenosylmethioninamine from S-adenosyl-L-methionine: step 1/1. Catalyzes the decarboxylation of S-adenosylmethionine to S-adenosylmethioninamine (dcAdoMet), the propylamine donor required for the synthesis of the polyamines spermine and spermidine from the diamine putrescine. The chain is S-adenosylmethionine decarboxylase proenzyme from Alkaliphilus oremlandii (strain OhILAs) (Clostridium oremlandii (strain OhILAs)).